The chain runs to 146 residues: Hemoglobin subunit beta (146 aa).

Val1 is subject to N-acetylvaline. The Globin domain maps to 2–146 (HLTGEEKSAV…VANALAHKYH (145 aa)). Residue Thr12 is modified to Phosphothreonine. Ser44 is subject to Phosphoserine. Lys59 bears the N6-acetyllysine mark. His63 serves as a coordination point for heme b. Lys82 carries the N6-acetyllysine modification. Heme b is bound at residue His92. Cys93 is modified (S-nitrosocysteine). The residue at position 144 (Lys144) is an N6-acetyllysine.

The protein belongs to the globin family. As to quaternary structure, heterotetramer of two alpha chains and two beta chains. In terms of tissue distribution, red blood cells.

In terms of biological role, involved in oxygen transport from the lung to the various peripheral tissues. This Saguinus mystax (Moustached tamarin) protein is Hemoglobin subunit beta (HBB).